The following is a 276-amino-acid chain: Radial spoke head protein 9 homolog (276 aa).

Belongs to the flagellar radial spoke RSP9 family. As to quaternary structure, component of the axonemal radial spoke 1 (RS1) and 2 (RS2) complexes, at least composed of spoke head proteins RSPH1, RSPH3, RSPH9 and the cilia-specific component RSPH4A or sperm-specific component RSPH6A, spoke stalk proteins RSPH14, DNAJB13, DYDC1, ROPN1L and NME5, and the RS1 complex-specific anchor protein IQUB. Interacts with IQUB. Interacts with RSPH3B. Interacts with RSPH4A. Interacts with RSPH6A. Interacts with CFAP61. Interacts with LRRC23.

The protein localises to the cytoplasm. Its subcellular location is the cytoskeleton. The protein resides in the cilium axoneme. It is found in the flagellum axoneme. It localises to the cell projection. The protein localises to the kinocilium. In terms of biological role, functions as part of axonemal radial spoke complexes that play an important part in the motility of sperm and cilia. Essential for both the radial spoke head assembly and the central pair microtubule stability in ependymal motile cilia. Required for motility of olfactory and neural cilia and for the structural integrity of ciliary axonemes in both 9+0 and 9+2 motile cilia. This Homo sapiens (Human) protein is Radial spoke head protein 9 homolog (RSPH9).